The sequence spans 99 residues: Probable small ribosomal subunit protein cS23 (99 aa).

It belongs to the chloroplast-specific ribosomal protein cS23 family. As to quaternary structure, part of the 30S ribosomal subunit.

Probably a ribosomal protein or a ribosome-associated protein. In Synechococcus sp. (strain JA-2-3B'a(2-13)) (Cyanobacteria bacterium Yellowstone B-Prime), this protein is Probable small ribosomal subunit protein cS23.